Reading from the N-terminus, the 198-residue chain is Snake venom metalloproteinase BpirMP (198 aa).

The Peptidase M12B domain occupies 1-197 (TYIEVAVVAD…HNPQCILNEP (197 aa)). Ca(2+) contacts are provided by Glu-4 and Asp-88. 3 disulfides stabilise this stretch: Cys-112/Cys-192, Cys-152/Cys-176, and Cys-154/Cys-159. Residue His-137 participates in Zn(2+) binding. The active site involves Glu-138. Zn(2+)-binding residues include His-141 and His-147. Residues Cys-192 and Asn-195 each coordinate Ca(2+).

Belongs to the venom metalloproteinase (M12B) family. P-I subfamily. As to quaternary structure, monomer. Zn(2+) serves as cofactor. As to expression, expressed by the venom gland.

It localises to the secreted. Inhibited by the chelating agents EDTA, EGTA and 1,10-phenanthroline. Is not inhibited by serine proteinase inhibitors aprotinin, leupeptin and benzamidine. In terms of biological role, zinc metalloprotease that preferentially degrades Aalpha chain of fibrinogen (FGA) (at a dose of 5 ug, whereas at a dose of 10 ug, both FGA and FGB are completely degraded). Degrades fibrin gel in a dose-dependent manner, as well blood clots formed in vitro (thrombolytic activity). Induces hemorrhage (in the dorsal skin of mice), with an MHD of 50 ug. The basal membrane components collagen (all chains of type IV) (COL4A4), fibronectin (FN1), laminin and nidogen are all degraded by this toxin. The sequence is that of Snake venom metalloproteinase BpirMP from Bothrops pirajai (Piraja's lancehead).